The sequence spans 260 residues: D-threitol dehydrogenase (260 aa).

21-50 (LVTGAASGIGAAIASAYATKGARIAAVDLN) lines the NAD(+) pocket. Tyr166 serves as the catalytic Proton acceptor. Lys170 contacts NAD(+).

Belongs to the short-chain dehydrogenases/reductases (SDR) family.

It carries out the reaction D-threitol + NAD(+) = D-erythrulose + NADH + H(+). Its pathway is carbohydrate metabolism; D-threitol degradation. Functionally, catalyzes the NAD-dependent reversible oxidation of D-threitol. Involved in the degradation pathway of D-threitol, that allows M.smegmatis to grow on this compound as the sole carbon source. Does not catalyze the oxidation of xylitol, L-sorbitol, and L-sorbose. The chain is D-threitol dehydrogenase from Mycolicibacterium smegmatis (strain ATCC 700084 / mc(2)155) (Mycobacterium smegmatis).